The sequence spans 149 residues: Ribonuclease pancreatic (149 aa).

The N-terminal stretch at 1–25 (MGLEKSLILLPLLVLVLAWVQPSLG) is a signal peptide. The substrate site is built by lysine 32 and arginine 35. The active-site Proton acceptor is histidine 37. Cystine bridges form between cysteine 51–cysteine 109, cysteine 65–cysteine 120, cysteine 83–cysteine 135, and cysteine 90–cysteine 97. 66–70 (KRVNT) contributes to the substrate binding site. A glycan (N-linked (GlcNAc...) asparagine) is linked at asparagine 87. Substrate is bound by residues lysine 91 and arginine 110. Residue histidine 144 is the Proton donor of the active site.

It belongs to the pancreatic ribonuclease family. In terms of assembly, monomer. Interacts with and forms tight 1:1 complexes with RNH1. Dimerization of two such complexes may occur. Interaction with RNH1 inhibits this protein. In terms of tissue distribution, pancreas.

It localises to the secreted. The catalysed reaction is an [RNA] containing cytidine + H2O = an [RNA]-3'-cytidine-3'-phosphate + a 5'-hydroxy-ribonucleotide-3'-[RNA].. It carries out the reaction an [RNA] containing uridine + H2O = an [RNA]-3'-uridine-3'-phosphate + a 5'-hydroxy-ribonucleotide-3'-[RNA].. Functionally, endonuclease that catalyzes the cleavage of RNA on the 3' side of pyrimidine nucleotides. Acts on single-stranded and double-stranded RNA. This chain is Ribonuclease pancreatic (RNASE1), found in Acomys cahirinus (Cairo spiny mouse).